Here is a 162-residue protein sequence, read N- to C-terminus: MGRIQQAFRGALLMDFWSAFGLGMRYFFAKKATLNYPFEKGPLSPRFRGQHALRRYANGEERCIACKLCEAICPAQAITIEAEPRSDGSRRTTRYDIDMTKCIYCGYCQEACPVDAIVEGPNFEFAAETREELFYDKAKLLENGDRWEREIAKNLELDAPYR.

2 4Fe-4S ferredoxin-type domains span residues 53–83 (LRRYANGEERCIACKLCEAICPAQAITIEAE) and 93–122 (TRYDIDMTKCIYCGYCQEACPVDAIVEGPN). Residues Cys63, Cys66, Cys69, Cys73, Cys102, Cys105, Cys108, and Cys112 each coordinate [4Fe-4S] cluster.

This sequence belongs to the complex I 23 kDa subunit family. As to quaternary structure, NDH-1 is composed of 14 different subunits. Subunits NuoA, H, J, K, L, M, N constitute the membrane sector of the complex. Requires [4Fe-4S] cluster as cofactor.

The protein resides in the cell inner membrane. The enzyme catalyses a quinone + NADH + 5 H(+)(in) = a quinol + NAD(+) + 4 H(+)(out). NDH-1 shuttles electrons from NADH, via FMN and iron-sulfur (Fe-S) centers, to quinones in the respiratory chain. The immediate electron acceptor for the enzyme in this species is believed to be ubiquinone. Couples the redox reaction to proton translocation (for every two electrons transferred, four hydrogen ions are translocated across the cytoplasmic membrane), and thus conserves the redox energy in a proton gradient. The chain is NADH-quinone oxidoreductase subunit I from Maricaulis maris (strain MCS10) (Caulobacter maris).